We begin with the raw amino-acid sequence, 191 residues long: MEYFDMRKMSVNLWRNAAGETREICTFPPAKRDFYWRASIASIAANGEFSLFPGMERIVTLLEGGEMFLESADHFNHTLKPLQPFAFAADQVVKAKLTAGQMSMDFNIMTRLDVCKAKVRIAERTFTTFGSRGGVVFVINGAWQLGDKLLTTDQGACWFDGRHTLRLLQPQGKLLFSEINWLAGHSPDQVQ.

Belongs to the Ves family.

The protein is Protein Ves of Escherichia coli O139:H28 (strain E24377A / ETEC).